Here is a 418-residue protein sequence, read N- to C-terminus: Equilibrative nucleotide transporter 3 (418 aa).

The next 11 helical transmembrane spans lie at 20-40, 56-76, 86-106, 112-132, 142-162, 186-206, 264-284, 291-311, 326-346, 353-373, and 392-412; these read MVVCCILGIGSLVSWNSMLTI, VLTLVYQPFALGTILILAYHE, LIGYILFTISTFLLIVLDLAT, IGPYIGLCAVVASFGLADATV, LMCPELVQSFMGGLAVSGALT, MFLAISTCIELLCVFLYAYVF, YAVNLFLIYVCTLSIFPGFLY, GLGDWYALVLVAMYNCWDLVG, KLITIAVLSRYLLIPAFYFTA, WMIMLISVLGLTNGHLTVCIM, and LVIFLLGGIFAGVALDWLWLI.

It belongs to the SLC29A/ENT transporter (TC 2.A.57) family. In terms of tissue distribution, expressed in root tips, vasculature of roots and leaves, and meristems of leaf primordia. Expressed in flowers and siliques.

It is found in the cell membrane. Functionally, nucleoside transporter that functions as a pyrimidine nucleoside carrier in all organs. Has high affinity for adenosine and uridine when expressed in a heterologous system (yeast). Mediates proton-dependent adenosine or uridine transport in Xenopus oocytes. The polypeptide is Equilibrative nucleotide transporter 3 (Arabidopsis thaliana (Mouse-ear cress)).